The sequence spans 198 residues: Fimbriae W protein (198 aa).

In terms of domain architecture, HTH luxR-type spans 127-192 (HYCTTRHFSV…QFLKYIRVNL (66 aa)).

The protein resides in the fimbrium. This is Fimbriae W protein (fimW) from Salmonella typhimurium (strain LT2 / SGSC1412 / ATCC 700720).